Consider the following 127-residue polypeptide: Small ribosomal subunit protein uS11 (127 aa).

The protein belongs to the universal ribosomal protein uS11 family. Part of the 30S ribosomal subunit. Interacts with proteins S7 and S18. Binds to IF-3.

Its function is as follows. Located on the platform of the 30S subunit, it bridges several disparate RNA helices of the 16S rRNA. Forms part of the Shine-Dalgarno cleft in the 70S ribosome. This Lactococcus lactis subsp. lactis (strain IL1403) (Streptococcus lactis) protein is Small ribosomal subunit protein uS11.